Reading from the N-terminus, the 878-residue chain is Staphylococcal nuclease domain-containing protein 1 (878 aa).

2 TNase-like domains span residues 3-142 (QYVS…IWGP) and 167-312 (KKLN…IWKN). A Phosphoserine modification is found at serine 316. 2 TNase-like domains span residues 326 to 464 (KDYS…MWSG) and 493 to 626 (RKLS…MWHD). The Tudor domain occupies 695 to 755 (KINVGMNVAA…SSLPDTYTKL (61 aa)).

The protein localises to the cytoplasm. It localises to the cytosol. The protein is Staphylococcal nuclease domain-containing protein 1 of Schizosaccharomyces pombe (strain 972 / ATCC 24843) (Fission yeast).